Consider the following 486-residue polypeptide: Cardiolipin synthase A (486 aa).

2 consecutive transmembrane segments (helical) span residues 3 to 23 (TFYT…IAGV) and 38 to 58 (MAWL…YLSV). PLD phosphodiesterase domains are found at residues 219–246 (MDLR…VDPR) and 399–426 (EGGL…DMRS). Catalysis depends on residues histidine 224, lysine 226, aspartate 231, histidine 404, lysine 406, and aspartate 411.

It belongs to the phospholipase D family. Cardiolipin synthase subfamily. ClsA sub-subfamily.

It localises to the cell inner membrane. It catalyses the reaction 2 a 1,2-diacyl-sn-glycero-3-phospho-(1'-sn-glycerol) = a cardiolipin + glycerol. Its function is as follows. Catalyzes the reversible phosphatidyl group transfer from one phosphatidylglycerol molecule to another to form cardiolipin (CL) (diphosphatidylglycerol) and glycerol. In Salmonella paratyphi A (strain ATCC 9150 / SARB42), this protein is Cardiolipin synthase A.